The sequence spans 103 residues: Small ribosomal subunit protein uS14c (103 aa).

Positions 26 to 56 (SSKKKIRSKVSPLSLSEKTKMQEKLQSLPRN) are disordered.

This sequence belongs to the universal ribosomal protein uS14 family. In terms of assembly, part of the 30S ribosomal subunit.

Its subcellular location is the plastid. The protein localises to the chloroplast. Its function is as follows. Binds 16S rRNA, required for the assembly of 30S particles. In Saccharum officinarum (Sugarcane), this protein is Small ribosomal subunit protein uS14c.